The sequence spans 675 residues: Putative exonuclease GOR (675 aa).

Basic and acidic residues predominate over residues 66-79 (VAKEAAPEASRHLG). Disordered regions lie at residues 66-90 (VAKE…APEG) and 225-263 (AKRT…TATT). The interval 358-483 (MPGLSRAALY…VRDGRKESLD (126 aa)) is GOR1-125 epitope.

It belongs to the REXO1/REXO3 family.

It localises to the cytoplasm. Its subcellular location is the nucleus. This is Putative exonuclease GOR (REXO1L1P) from Homo sapiens (Human).